The primary structure comprises 400 residues: Nicotinate phosphoribosyltransferase (400 aa).

Position 220 is a phosphohistidine; by autocatalysis (H220).

This sequence belongs to the NAPRTase family. Post-translationally, transiently phosphorylated on a His residue during the reaction cycle. Phosphorylation strongly increases the affinity for substrates and increases the rate of nicotinate D-ribonucleotide production. Dephosphorylation regenerates the low-affinity form of the enzyme, leading to product release.

It carries out the reaction nicotinate + 5-phospho-alpha-D-ribose 1-diphosphate + ATP + H2O = nicotinate beta-D-ribonucleotide + ADP + phosphate + diphosphate. It participates in cofactor biosynthesis; NAD(+) biosynthesis; nicotinate D-ribonucleotide from nicotinate: step 1/1. Its function is as follows. Catalyzes the synthesis of beta-nicotinate D-ribonucleotide from nicotinate and 5-phospho-D-ribose 1-phosphate at the expense of ATP. This Salmonella agona (strain SL483) protein is Nicotinate phosphoribosyltransferase.